The sequence spans 1165 residues: Immunoglobulin superfamily member 3 (1165 aa).

Residues 1–20 (MGTAAGLLLAALLLAGTSWA) form the signal peptide. Topologically, residues 21–1095 (QREVNIQQGP…LQSTICANDA (1075 aa)) are extracellular. 8 Ig-like C2-type domains span residues 22–139 (REVN…AKMN), 144–262 (PDTL…WFPL), 276–386 (PTDK…RGPS), 406–527 (PLRT…WQLL), 545–661 (FAVT…WTQL), 678–800 (PRLQ…EEAS), 810–934 (PDAN…WYKR), and 951–1067 (PALQ…WYLL). Intrachain disulfides connect cysteine 43–cysteine 121 and cysteine 168–cysteine 246. Residues 250–252 (EWI) carry the EWI motif motif. Cystine bridges form between cysteine 302-cysteine 376, cysteine 432-cysteine 511, cysteine 566-cysteine 645, cysteine 701-cysteine 779, cysteine 835-cysteine 918, and cysteine 974-cysteine 1051. Residues 1096 to 1116 (LFYLVFFYPFPIFGILIITIL) traverse the membrane as a helical segment. Topologically, residues 1117–1165 (LVRFRHRPTSKPGEGKNGVPLLWIKEPHLNYSPTCLEPPVLSIHPGTID) are cytoplasmic.

The protein resides in the membrane. The polypeptide is Immunoglobulin superfamily member 3 (igsf3) (Xenopus laevis (African clawed frog)).